A 382-amino-acid chain; its full sequence is 3-phytase (382 aa).

Positions 1-26 (MKVPKTMLLSTAAGLLLSLTATSVSA) are cleaved as a signal peptide. One can recognise a BPP domain in the interval 27–361 (HYVNEEHHFK…VSWEQIAQHL (335 aa)).

It localises to the secreted. The catalysed reaction is 1D-myo-inositol hexakisphosphate + H2O = 1D-myo-inositol 1,2,4,5,6-pentakisphosphate + phosphate. This is 3-phytase (phy) from Bacillus subtilis (strain 168).